Consider the following 389-residue polypeptide: Probable acyl-CoA dehydrogenase fadE25 (389 aa).

It belongs to the acyl-CoA dehydrogenase family. FAD is required as a cofactor.

The enzyme catalyses a 2,3-saturated acyl-CoA + A = a 2,3-dehydroacyl-CoA + AH2. This is Probable acyl-CoA dehydrogenase fadE25 (fadE25) from Mycobacterium leprae (strain TN).